The primary structure comprises 428 residues: Glycine reductase complex component B subunits alpha and beta (428 aa).

Residue C242 is the Schiff-base intermediate with substrate; via pyruvic acid of the active site. Residue C242 is modified to Pyruvic acid (Cys).

Heterohexamer of two alpha, two beta and two gamma subunits. Component of the glycine reductase complex, together with components A and C. PB is substrate specific. The peptide chain is cleaved into beta and alpha chains, and the alpha chain N-terminal cysteine is deaminated and oxidized to form a reactive pyruvoyl group.

It catalyses the reaction acetyl phosphate + [thioredoxin]-disulfide + NH4(+) + H2O = [thioredoxin]-dithiol + glycine + phosphate + H(+). In terms of biological role, in the first step of glycine reductase, the substrate is bound to component PB via a Schiff base intermediate. Then the PB-activated substrate is nucleophilically attacked by the selenol anion of component PA to transform it to a carboxymethylated selenoether and the respective amine. By action of component PC, acetyl phosphate is formed, leaving component PA in its oxidized state. Finally component PA becomes reduced by the thioredoxin system to start a new catalytic cycle of reductive deamination. The polypeptide is Glycine reductase complex component B subunits alpha and beta (grdE) (Peptoclostridium acidaminophilum (Eubacterium acidaminophilum)).